The primary structure comprises 83 residues: Putative cytochrome b5 B11H24.095 (83 aa).

The region spanning 2 to 78 (SQTFTKSQVA…GTKLKVGTLA (77 aa)) is the Cytochrome b5 heme-binding domain. The heme site is built by His37 and His60.

Belongs to the cytochrome b5 family.

The polypeptide is Putative cytochrome b5 B11H24.095 (Neurospora crassa (strain ATCC 24698 / 74-OR23-1A / CBS 708.71 / DSM 1257 / FGSC 987)).